The following is a 50-amino-acid chain: MSLDLVGMYGSFLSEGANLRPFGRYAKIPRIGSHMTRYVEFLRRRISGRA.

This is an uncharacterized protein from Treponema pallidum (strain Nichols).